Reading from the N-terminus, the 258-residue chain is Alcohol dehydrogenase 2 (258 aa).

9-33 (IFVGGLGFIGYEACKQLMAKNMASF) contributes to the NAD(+) binding site. Ser137 contributes to the substrate binding site. The Proton acceptor role is filled by Tyr150.

Belongs to the short-chain dehydrogenases/reductases (SDR) family. As to quaternary structure, homodimer.

It carries out the reaction a primary alcohol + NAD(+) = an aldehyde + NADH + H(+). The enzyme catalyses a secondary alcohol + NAD(+) = a ketone + NADH + H(+). This is Alcohol dehydrogenase 2 (ADH2) from Ceratitis cosyra (Mango fruit fly).